A 628-amino-acid polypeptide reads, in one-letter code: Alpha-L-arabinofuranosidase A (628 aa).

The signal sequence occupies residues 1-25; it reads MVAFSALSGVSAVSLLLSLVQNAHG. N-linked (GlcNAc...) asparagine glycosylation is found at N36, N51, N74, N152, N171, N260, N359, N440, N493, and N610.

This sequence belongs to the glycosyl hydrolase 51 family.

It carries out the reaction Hydrolysis of terminal non-reducing alpha-L-arabinofuranoside residues in alpha-L-arabinosides.. It participates in glycan metabolism; L-arabinan degradation. Its function is as follows. Acts only on small linear 1,5-alpha-linked L-arabinofuranosyl oligosaccharides. This chain is Alpha-L-arabinofuranosidase A (abfA), found in Aspergillus niger.